Reading from the N-terminus, the 147-residue chain is Hemoglobin subunit beta (147 aa).

Val2 bears the N-acetylvaline mark. The 145-residue stretch at 3–147 (HLTGEEKAAV…VANALAHKYH (145 aa)) folds into the Globin domain. Thr13 bears the Phosphothreonine mark. Ser45 bears the Phosphoserine mark. Lys60 is modified (N6-acetyllysine). Position 64 (His64) interacts with heme b. Lys83 is modified (N6-acetyllysine). His93 contacts heme b. The residue at position 94 (Cys94) is an S-nitrosocysteine. Lys145 bears the N6-acetyllysine mark.

This sequence belongs to the globin family. Heterotetramer of two alpha chains and two beta chains. As to expression, red blood cells.

In terms of biological role, involved in oxygen transport from the lung to the various peripheral tissues. This is Hemoglobin subunit beta (HBB) from Ailuropoda melanoleuca (Giant panda).